Reading from the N-terminus, the 447-residue chain is C4-dicarboxylate transport protein 3 (447 aa).

8 helical membrane-spanning segments follow: residues 5–27, 42–64, 77–99, 146–165, 186–208, 223–245, 315–337, and 352–374; these read TLGK…GVAA, IKLI…IARM, ALVY…VNLV, LARN…GIAL, VFSI…MAFT, LMAT…VARL, IFVA…LGVL, and FITL…VLLL.

It belongs to the dicarboxylate/amino acid:cation symporter (DAACS) (TC 2.A.23) family.

It is found in the cell inner membrane. In terms of biological role, responsible for the transport of dicarboxylates such as succinate, fumarate, and malate from the periplasm across the membrane. This Ralstonia nicotianae (strain ATCC BAA-1114 / GMI1000) (Ralstonia solanacearum) protein is C4-dicarboxylate transport protein 3 (dctA3).